A 630-amino-acid polypeptide reads, in one-letter code: Chaperone protein HtpG (630 aa).

The tract at residues 1–341 (MTQNATSETL…SADLPLNVSR (341 aa)) is a; substrate-binding. The b stretch occupies residues 342–558 (EILQESRDVR…QNDLSPHLLR (217 aa)). Residues 559–630 (MLKAAGQEVP…KRLNALLLKV (72 aa)) form a c region.

The protein belongs to the heat shock protein 90 family. Homodimer.

Its subcellular location is the cytoplasm. In terms of biological role, molecular chaperone. Has ATPase activity. The chain is Chaperone protein HtpG from Bordetella avium (strain 197N).